The primary structure comprises 378 residues: POU domain, class 3, transcription factor 2 (378 aa).

3 disordered regions span residues 1 to 28 (MATT…SMQQ), 86 to 118 (SPRD…HDSR), and 151 to 205 (LIPG…TPTS). Residues 164–181 (MRDAHEDHHSPHLSDHGH) are compositionally biased toward basic and acidic residues. In terms of domain architecture, POU-specific spans 200-274 (EDTPTSDDLE…LLNKWLEEAD (75 aa)). The residue at position 279 (Ser-279) is a Phosphoserine. A DNA-binding region (homeobox) is located at residues 292-351 (KRKKRTSIEVSVKGALESHFLKCPKPAASEITSLADSLQLEKEVVRVWFCNRRQKEKRMT). Residues 347–378 (EKRMTPPGGPLPGTEDVYGDTPPHHGVQTPVQ) form a disordered region.

This sequence belongs to the POU transcription factor family. Class-3 subfamily. As to expression, predominantly expressed in the central nervous system, with strong expression in the cerebellum.

It is found in the nucleus. Functionally, transcription factor that may play important roles in patterning the embryonic brain. This Danio rerio (Zebrafish) protein is POU domain, class 3, transcription factor 2 (pou3f2).